Reading from the N-terminus, the 115-residue chain is NADH-ubiquinone oxidoreductase chain 3 (115 aa).

A run of 3 helical transmembrane segments spans residues 4–24, 55–75, and 84–104; these read LLTM…AFWL, FFLV…LLPI, and INTM…GLAY.

The protein belongs to the complex I subunit 3 family. Core subunit of respiratory chain NADH dehydrogenase (Complex I) which is composed of 45 different subunits. Interacts with TMEM186. Interacts with TMEM242.

It is found in the mitochondrion inner membrane. The enzyme catalyses a ubiquinone + NADH + 5 H(+)(in) = a ubiquinol + NAD(+) + 4 H(+)(out). Functionally, core subunit of the mitochondrial membrane respiratory chain NADH dehydrogenase (Complex I) which catalyzes electron transfer from NADH through the respiratory chain, using ubiquinone as an electron acceptor. Essential for the catalytic activity of complex I. The chain is NADH-ubiquinone oxidoreductase chain 3 from Neotoma lepida (Desert woodrat).